The following is a 548-amino-acid chain: Hydroxylamine reductase (548 aa).

Residues Cys3, Cys6, Cys15, and Cys21 each coordinate [4Fe-4S] cluster. Residues His239, Glu263, Cys307, Cys401, Cys429, Cys454, Glu489, and Lys491 each contribute to the hybrid [4Fe-2O-2S] cluster site. A Cysteine persulfide modification is found at Cys401.

The protein belongs to the HCP family. [4Fe-4S] cluster is required as a cofactor. The cofactor is hybrid [4Fe-2O-2S] cluster.

It is found in the cytoplasm. The enzyme catalyses A + NH4(+) + H2O = hydroxylamine + AH2 + H(+). Functionally, catalyzes the reduction of hydroxylamine to form NH(3) and H(2)O. The chain is Hydroxylamine reductase from Desulfosudis oleivorans (strain DSM 6200 / JCM 39069 / Hxd3) (Desulfococcus oleovorans).